The following is a 245-amino-acid chain: Ribonuclease 3 (245 aa).

In terms of domain architecture, RNase III spans Phe-17–Gly-146. Mg(2+) is bound at residue Glu-59. Asp-63 is an active-site residue. Mg(2+)-binding residues include Asp-132 and Glu-135. Residue Glu-135 is part of the active site. The region spanning Asp-172–Asn-241 is the DRBM domain.

Belongs to the ribonuclease III family. As to quaternary structure, homodimer. Mg(2+) is required as a cofactor.

The protein localises to the cytoplasm. It carries out the reaction Endonucleolytic cleavage to 5'-phosphomonoester.. Functionally, digests double-stranded RNA. Involved in the processing of primary rRNA transcript to yield the immediate precursors to the large and small rRNAs (23S and 16S). Processes some mRNAs, and tRNAs when they are encoded in the rRNA operon. Processes pre-crRNA and tracrRNA of type II CRISPR loci if present in the organism. This chain is Ribonuclease 3, found in Staphylococcus epidermidis (strain ATCC 35984 / DSM 28319 / BCRC 17069 / CCUG 31568 / BM 3577 / RP62A).